The primary structure comprises 184 residues: Dynactin subunit 6 (184 aa).

The protein belongs to the dynactin subunits 5/6 family. Dynactin subunit 6 subfamily. As to quaternary structure, subunit of dynactin, a multiprotein complex part of a tripartite complex with dynein and a adapter, such as BICDL1, BICD2 or HOOK3. The dynactin complex is built around ACTR1A/ACTB filament and consists of an actin-related filament composed of a shoulder domain, a pointed end and a barbed end.

Its subcellular location is the cytoplasm. The protein localises to the cytoskeleton. Part of the dynactin complex that activates the molecular motor dynein for ultra-processive transport along microtubules. This Nematostella vectensis (Starlet sea anemone) protein is Dynactin subunit 6 (dctn6).